A 215-amino-acid chain; its full sequence is MASGRWASPGPAWASRRPLQAQVVLKSASPGPAPASQQASSFGSAPAQLPPAFVDPELSPAMLLSPTCLPVACTGPGLAGEQPLQAPLLPPRGISRPSSGLTAASRDQVPACLPAACVRPSSSVTVACSGPTHASGTLSRGVSPCLTLASLTLREFSVGPCLTLASLTLREVSMSPCLTLVSLTLRAILPHAGLLRPSSCLCWPFQAQPLPVGGL.

The tract at residues 25 to 48 (LKSASPGPAPASQQASSFGSAPAQ) is disordered. Residues 27 to 47 (SASPGPAPASQQASSFGSAPA) show a composition bias toward low complexity.

This is an uncharacterized protein from Homo sapiens (Human).